Here is a 342-residue protein sequence, read N- to C-terminus: uncharacterized protein (342 aa).

9 to 31 (LIFGGTTGIGLMTTIDFIIHNTS) is an NADP(+) binding site. Ser-208 contributes to the substrate binding site. The Proton acceptor role is filled by Tyr-222.

Belongs to the short-chain dehydrogenases/reductases (SDR) family.

This is an uncharacterized protein from Acanthamoeba polyphaga (Amoeba).